We begin with the raw amino-acid sequence, 436 residues long: Serine--tRNA ligase (436 aa).

242–244 (TAE) is a binding site for L-serine. 273–275 (RSE) serves as a coordination point for ATP. Position 296 (E296) interacts with L-serine. ATP is bound at residue 360 to 363 (EISS). L-serine is bound at residue S395.

This sequence belongs to the class-II aminoacyl-tRNA synthetase family. Type-1 seryl-tRNA synthetase subfamily. As to quaternary structure, homodimer. The tRNA molecule binds across the dimer.

It is found in the cytoplasm. The enzyme catalyses tRNA(Ser) + L-serine + ATP = L-seryl-tRNA(Ser) + AMP + diphosphate + H(+). It carries out the reaction tRNA(Sec) + L-serine + ATP = L-seryl-tRNA(Sec) + AMP + diphosphate + H(+). It functions in the pathway aminoacyl-tRNA biosynthesis; selenocysteinyl-tRNA(Sec) biosynthesis; L-seryl-tRNA(Sec) from L-serine and tRNA(Sec): step 1/1. Catalyzes the attachment of serine to tRNA(Ser). Is also able to aminoacylate tRNA(Sec) with serine, to form the misacylated tRNA L-seryl-tRNA(Sec), which will be further converted into selenocysteinyl-tRNA(Sec). This chain is Serine--tRNA ligase, found in Polynucleobacter necessarius subsp. necessarius (strain STIR1).